Reading from the N-terminus, the 485-residue chain is Inosine-5'-monophosphate dehydrogenase (485 aa).

2 CBS domains span residues 99–154 (IVED…LVKE) and 156–215 (MTKD…VRDE). NAD(+) is bound by residues Asp247 and 294-296 (GIG). Positions 296 and 298 each coordinate K(+). Ser299 serves as a coordination point for IMP. Cys301 contributes to the K(+) binding site. Cys301 acts as the Thioimidate intermediate in catalysis. Residues 334–336 (DGG), 357–358 (GN), and 381–385 (YRGMG) contribute to the IMP site. The Proton acceptor role is filled by Arg397. IMP is bound at residue Glu412. The K(+) site is built by Glu466, Ser467, and His468.

This sequence belongs to the IMPDH/GMPR family. As to quaternary structure, homotetramer. It depends on K(+) as a cofactor.

It catalyses the reaction IMP + NAD(+) + H2O = XMP + NADH + H(+). Its pathway is purine metabolism; XMP biosynthesis via de novo pathway; XMP from IMP: step 1/1. With respect to regulation, mycophenolic acid (MPA) is a non-competitive inhibitor that prevents formation of the closed enzyme conformation by binding to the same site as the amobile flap. In contrast, mizoribine monophosphate (MZP) is a competitive inhibitor that induces the closed conformation. MPA is a potent inhibitor of mammalian IMPDHs but a poor inhibitor of the bacterial enzymes. MZP is a more potent inhibitor of bacterial IMPDH. Catalyzes the conversion of inosine 5'-phosphate (IMP) to xanthosine 5'-phosphate (XMP), the first committed and rate-limiting step in the de novo synthesis of guanine nucleotides, and therefore plays an important role in the regulation of cell growth. The polypeptide is Inosine-5'-monophosphate dehydrogenase (Pyrococcus abyssi (strain GE5 / Orsay)).